Reading from the N-terminus, the 347-residue chain is UDP-3-O-acylglucosamine N-acyltransferase (347 aa).

Histidine 242 functions as the Proton acceptor in the catalytic mechanism.

Belongs to the transferase hexapeptide repeat family. LpxD subfamily. In terms of assembly, homotrimer.

It catalyses the reaction a UDP-3-O-[(3R)-3-hydroxyacyl]-alpha-D-glucosamine + a (3R)-hydroxyacyl-[ACP] = a UDP-2-N,3-O-bis[(3R)-3-hydroxyacyl]-alpha-D-glucosamine + holo-[ACP] + H(+). The protein operates within bacterial outer membrane biogenesis; LPS lipid A biosynthesis. Catalyzes the N-acylation of UDP-3-O-acylglucosamine using 3-hydroxyacyl-ACP as the acyl donor. Is involved in the biosynthesis of lipid A, a phosphorylated glycolipid that anchors the lipopolysaccharide to the outer membrane of the cell. The sequence is that of UDP-3-O-acylglucosamine N-acyltransferase from Dechloromonas aromatica (strain RCB).